Reading from the N-terminus, the 342-residue chain is Holliday junction branch migration complex subunit RuvB (342 aa).

Residues 1-179 (MTNILSPEKS…FGIPMRLNFY (179 aa)) are large ATPase domain (RuvB-L). ATP is bound by residues isoleucine 18, arginine 19, glycine 60, lysine 63, threonine 64, threonine 65, 126 to 128 (EDF), arginine 169, tyrosine 179, and arginine 216. Mg(2+) is bound at residue threonine 64. The small ATPAse domain (RuvB-S) stretch occupies residues 180–250 (NTEELKQVLN…ICDFGLKRLT (71 aa)). Residues 253–342 (SIGLDSNDYR…NQLNILNENE (90 aa)) form a head domain (RuvB-H) region. DNA contacts are provided by arginine 289, arginine 308, and arginine 313.

It belongs to the RuvB family. Homohexamer. Forms an RuvA(8)-RuvB(12)-Holliday junction (HJ) complex. HJ DNA is sandwiched between 2 RuvA tetramers; dsDNA enters through RuvA and exits via RuvB. An RuvB hexamer assembles on each DNA strand where it exits the tetramer. Each RuvB hexamer is contacted by two RuvA subunits (via domain III) on 2 adjacent RuvB subunits; this complex drives branch migration. In the full resolvosome a probable DNA-RuvA(4)-RuvB(12)-RuvC(2) complex forms which resolves the HJ.

Its subcellular location is the cytoplasm. It catalyses the reaction ATP + H2O = ADP + phosphate + H(+). Functionally, participates in UV-tolerance of Synechocystis PCC 6803. The RuvA-RuvB-RuvC complex processes Holliday junction (HJ) DNA during genetic recombination and DNA repair, while the RuvA-RuvB complex plays an important role in the rescue of blocked DNA replication forks via replication fork reversal (RFR). RuvA specifically binds to HJ cruciform DNA, conferring on it an open structure. The RuvB hexamer acts as an ATP-dependent pump, pulling dsDNA into and through the RuvAB complex. RuvB forms 2 homohexamers on either side of HJ DNA bound by 1 or 2 RuvA tetramers; 4 subunits per hexamer contact DNA at a time. Coordinated motions by a converter formed by DNA-disengaged RuvB subunits stimulates ATP hydrolysis and nucleotide exchange. Immobilization of the converter enables RuvB to convert the ATP-contained energy into a lever motion, pulling 2 nucleotides of DNA out of the RuvA tetramer per ATP hydrolyzed, thus driving DNA branch migration. The RuvB motors rotate together with the DNA substrate, which together with the progressing nucleotide cycle form the mechanistic basis for DNA recombination by continuous HJ branch migration. Branch migration allows RuvC to scan DNA until it finds its consensus sequence, where it cleaves and resolves cruciform DNA. This Rickettsia prowazekii (strain Madrid E) protein is Holliday junction branch migration complex subunit RuvB.